The chain runs to 146 residues: 3-dehydroquinate dehydratase (146 aa).

The active-site Proton acceptor is the Tyr-23. Substrate is bound by residues Asn-74, His-80, and Asp-87. His-100 acts as the Proton donor in catalysis. Substrate contacts are provided by residues 101–102 (IS) and Arg-111.

The protein belongs to the type-II 3-dehydroquinase family. As to quaternary structure, homododecamer.

It carries out the reaction 3-dehydroquinate = 3-dehydroshikimate + H2O. Its pathway is metabolic intermediate biosynthesis; chorismate biosynthesis; chorismate from D-erythrose 4-phosphate and phosphoenolpyruvate: step 3/7. Functionally, catalyzes a trans-dehydration via an enolate intermediate. In Bacillus cereus (strain ATCC 14579 / DSM 31 / CCUG 7414 / JCM 2152 / NBRC 15305 / NCIMB 9373 / NCTC 2599 / NRRL B-3711), this protein is 3-dehydroquinate dehydratase.